The primary structure comprises 555 residues: Oligo-1,6-glucosidase (555 aa).

Residue Asp199 is the Nucleophile of the active site. Glu255 acts as the Proton donor in catalysis.

This sequence belongs to the glycosyl hydrolase 13 family.

It is found in the cytoplasm. The catalysed reaction is Hydrolysis of (1-&gt;6)-alpha-D-glucosidic linkages in some oligosaccharides produced from starch and glycogen by alpha-amylase, and in isomaltose.. This Heyndrickxia coagulans (Weizmannia coagulans) protein is Oligo-1,6-glucosidase (malL).